The following is a 468-amino-acid chain: 6-phospho-beta-galactosidase (468 aa).

D-galactose 6-phosphate contacts are provided by Q19, H116, N159, E160, and N297. E160 acts as the Proton donor in catalysis. Residue E375 is the Nucleophile of the active site. D-galactose 6-phosphate contacts are provided by S428, W429, K435, and Y437.

It belongs to the glycosyl hydrolase 1 family.

It carries out the reaction a 6-phospho-beta-D-galactoside + H2O = D-galactose 6-phosphate + an alcohol. Its pathway is carbohydrate metabolism; lactose degradation; D-galactose 6-phosphate and beta-D-glucose from lactose 6-phosphate: step 1/1. This is 6-phospho-beta-galactosidase from Streptococcus pyogenes serotype M18 (strain MGAS8232).